Reading from the N-terminus, the 155-residue chain is Ribosomal RNA large subunit methyltransferase H (155 aa).

S-adenosyl-L-methionine contacts are provided by residues L73, G104, and 123-128 (LSPLTL).

Belongs to the RNA methyltransferase RlmH family. Homodimer.

It is found in the cytoplasm. It catalyses the reaction pseudouridine(1915) in 23S rRNA + S-adenosyl-L-methionine = N(3)-methylpseudouridine(1915) in 23S rRNA + S-adenosyl-L-homocysteine + H(+). Its function is as follows. Specifically methylates the pseudouridine at position 1915 (m3Psi1915) in 23S rRNA. The protein is Ribosomal RNA large subunit methyltransferase H of Pseudomonas putida (strain W619).